The chain runs to 107 residues: N(4)-acetylcytidine amidohydrolase (107 aa).

The ASCH domain maps to 6–102 (TFYRRFQADI…RLYVISFSLV (97 aa)). Residue K20 is the Proton acceptor of the active site. T23 functions as the Nucleophile in the catalytic mechanism. The Proton donor role is filled by E73.

Belongs to the N(4)-acetylcytidine amidohydrolase family.

The catalysed reaction is N(4)-acetylcytidine + H2O = cytidine + acetate + H(+). The enzyme catalyses N(4)-acetyl-2'-deoxycytidine + H2O = 2'-deoxycytidine + acetate + H(+). It catalyses the reaction N(4)-acetylcytosine + H2O = cytosine + acetate + H(+). Its function is as follows. Catalyzes the hydrolysis of N(4)-acetylcytidine (ac4C). The polypeptide is N(4)-acetylcytidine amidohydrolase (Edwardsiella ictaluri (strain 93-146)).